The following is a 256-amino-acid chain: Small ribosomal subunit protein eS1 (256 aa).

Position 2 is an N-acetylalanine; partial (Ala-2).

It belongs to the eukaryotic ribosomal protein eS1 family. Component of the small ribosomal subunit. Mature ribosomes consist of a small (40S) and a large (60S) subunit. The 40S subunit contains about 33 different proteins and 1 molecule of RNA (18S). The 60S subunit contains about 49 different proteins and 3 molecules of RNA (25S, 5.8S and 5S).

The protein resides in the cytoplasm. This Coprinopsis cinerea (strain Okayama-7 / 130 / ATCC MYA-4618 / FGSC 9003) (Inky cap fungus) protein is Small ribosomal subunit protein eS1.